The following is a 90-amino-acid chain: Acylphosphatase (90 aa).

One can recognise an Acylphosphatase-like domain in the interval 3-90 (KKQFIVYGLV…REFTDFSVRY (88 aa)). Active-site residues include arginine 18 and asparagine 36.

This sequence belongs to the acylphosphatase family.

It carries out the reaction an acyl phosphate + H2O = a carboxylate + phosphate + H(+). The sequence is that of Acylphosphatase (acyP) from Pasteurella multocida (strain Pm70).